Here is a 111-residue protein sequence, read N- to C-terminus: Probable U2 small nuclear ribonucleoprotein B'' (111 aa).

Residues 4–83 (NTLYVNNLND…KEMKIQYAHS (80 aa)) form the RRM domain.

Belongs to the 40S cdc5-associated complex (or cwf complex), a spliceosome sub-complex reminiscent of a late-stage spliceosome composed of the U2, U5 and U6 snRNAs and at least brr2, cdc5, cwf2/prp3, cwf3/syf1, cwf4/syf3, cwf5/ecm2, spp42/cwf6, cwf7/spf27, cwf8, cwf9, cwf10, cwf11, cwf12, prp45/cwf13, cwf14, cwf15, cwf16, cwf17, cwf18, cwf19, cwf20, cwf21, cwf22, cwf23, cwf24, cwf25, cwf26, cyp7/cwf27, cwf28, cwf29/ist3, lea1, msl1, prp5/cwf1, prp10, prp12/sap130, prp17, prp22, sap61, sap62, sap114, sap145, slu7, smb1, smd1, smd3, smf1, smg1 and syf2.

It is found in the nucleus. Its function is as follows. Involved in pre-mRNA splicing. This protein is associated with snRNP U2. It binds stem loop IV of U2 snRNA. In Schizosaccharomyces pombe (strain 972 / ATCC 24843) (Fission yeast), this protein is Probable U2 small nuclear ribonucleoprotein B'' (msl1).